Consider the following 234-residue polypeptide: Orotate phosphoribosyltransferase (234 aa).

Lysine 30 contributes to the 5-phospho-alpha-D-ribose 1-diphosphate binding site. 38 to 39 (FF) serves as a coordination point for orotate. 5-phospho-alpha-D-ribose 1-diphosphate contacts are provided by residues 80–81 (YK), arginine 110, lysine 111, lysine 114, histidine 116, and 136–144 (DDVITAGTA). Residues threonine 140 and arginine 168 each coordinate orotate.

The protein belongs to the purine/pyrimidine phosphoribosyltransferase family. PyrE subfamily. As to quaternary structure, homodimer.

It catalyses the reaction orotidine 5'-phosphate + diphosphate = orotate + 5-phospho-alpha-D-ribose 1-diphosphate. It participates in pyrimidine metabolism; UMP biosynthesis via de novo pathway; UMP from orotate: step 1/2. Catalyzes the transfer of a ribosyl phosphate group from 5-phosphoribose 1-diphosphate to orotate, leading to the formation of orotidine monophosphate (OMP). The chain is Orotate phosphoribosyltransferase (URA5) from Metarhizium anisopliae (Entomophthora anisopliae).